We begin with the raw amino-acid sequence, 388 residues long: Succinate--CoA ligase [ADP-forming] subunit beta (388 aa).

In terms of domain architecture, ATP-grasp spans 9 to 244 (KQLFAEYGLP…PSQDDPREAH (236 aa)). Residues lysine 46, 53-55 (GRG), glutamate 99, threonine 102, and glutamate 107 each bind ATP. Residues asparagine 199 and aspartate 213 each coordinate Mg(2+). Substrate contacts are provided by residues asparagine 264 and 321 to 323 (GIV).

This sequence belongs to the succinate/malate CoA ligase beta subunit family. In terms of assembly, heterotetramer of two alpha and two beta subunits. Requires Mg(2+) as cofactor.

It catalyses the reaction succinate + ATP + CoA = succinyl-CoA + ADP + phosphate. It carries out the reaction GTP + succinate + CoA = succinyl-CoA + GDP + phosphate. It participates in carbohydrate metabolism; tricarboxylic acid cycle; succinate from succinyl-CoA (ligase route): step 1/1. Functionally, succinyl-CoA synthetase functions in the citric acid cycle (TCA), coupling the hydrolysis of succinyl-CoA to the synthesis of either ATP or GTP and thus represents the only step of substrate-level phosphorylation in the TCA. The beta subunit provides nucleotide specificity of the enzyme and binds the substrate succinate, while the binding sites for coenzyme A and phosphate are found in the alpha subunit. The protein is Succinate--CoA ligase [ADP-forming] subunit beta of Pseudomonas fluorescens (strain ATCC BAA-477 / NRRL B-23932 / Pf-5).